A 483-amino-acid chain; its full sequence is Glutamyl-tRNA(Gln) amidotransferase subunit A (483 aa).

Active-site charge relay system residues include lysine 77 and serine 152. The active-site Acyl-ester intermediate is the serine 176.

The protein belongs to the amidase family. GatA subfamily. In terms of assembly, heterotrimer of A, B and C subunits.

The enzyme catalyses L-glutamyl-tRNA(Gln) + L-glutamine + ATP + H2O = L-glutaminyl-tRNA(Gln) + L-glutamate + ADP + phosphate + H(+). Its function is as follows. Allows the formation of correctly charged Gln-tRNA(Gln) through the transamidation of misacylated Glu-tRNA(Gln) in organisms which lack glutaminyl-tRNA synthetase. The reaction takes place in the presence of glutamine and ATP through an activated gamma-phospho-Glu-tRNA(Gln). This Shouchella clausii (strain KSM-K16) (Alkalihalobacillus clausii) protein is Glutamyl-tRNA(Gln) amidotransferase subunit A.